The primary structure comprises 237 residues: UPF0053 protein HI_0056 (237 aa).

The next 7 membrane-spanning stretches (helical) occupy residues 12-32, 49-69, 90-110, 126-146, 151-171, 188-208, and 210-230; these read ISLV…IIFI, ILGL…LAWI, ILLI…KEAI, YLGV…DSVI, MASH…VMMF, ILAL…SLDI, and IPKG…MINI.

The protein belongs to the UPF0053 family.

It is found in the cell membrane. In Haemophilus influenzae (strain ATCC 51907 / DSM 11121 / KW20 / Rd), this protein is UPF0053 protein HI_0056.